Here is a 274-residue protein sequence, read N- to C-terminus: 2,3,4,5-tetrahydropyridine-2,6-dicarboxylate N-succinyltransferase (274 aa).

2 residues coordinate substrate: Arg-107 and Asp-144.

The protein belongs to the transferase hexapeptide repeat family. Homotrimer.

The protein localises to the cytoplasm. It carries out the reaction (S)-2,3,4,5-tetrahydrodipicolinate + succinyl-CoA + H2O = (S)-2-succinylamino-6-oxoheptanedioate + CoA. It functions in the pathway amino-acid biosynthesis; L-lysine biosynthesis via DAP pathway; LL-2,6-diaminopimelate from (S)-tetrahydrodipicolinate (succinylase route): step 1/3. This is 2,3,4,5-tetrahydropyridine-2,6-dicarboxylate N-succinyltransferase from Cereibacter sphaeroides (strain ATCC 17029 / ATH 2.4.9) (Rhodobacter sphaeroides).